The sequence spans 134 residues: Small ribosomal subunit protein uS11 (134 aa).

A disordered region spans residues 115–134 (TPIPHNGTRPPKKVLKRDLK). The segment covering 124–134 (PPKKVLKRDLK) has biased composition (basic residues).

The protein belongs to the universal ribosomal protein uS11 family. Part of the 30S ribosomal subunit. Interacts with proteins S7 and S18. Binds to IF-3.

Functionally, located on the platform of the 30S subunit, it bridges several disparate RNA helices of the 16S rRNA. Forms part of the Shine-Dalgarno cleft in the 70S ribosome. The sequence is that of Small ribosomal subunit protein uS11 from Mycoplasma mobile (strain ATCC 43663 / 163K / NCTC 11711) (Mesomycoplasma mobile).